Reading from the N-terminus, the 130-residue chain is Small ribosomal subunit protein bS16 (130 aa).

The tract at residues 80–130 is disordered; it reads AGHTPKKERANMKKAQPGKKAVERAEEKAAKASAAAEAPAEAPAAEAAAEE. A compositionally biased stretch (basic and acidic residues) spans 99–109; the sequence is KAVERAEEKAA. Positions 110–130 are enriched in low complexity; the sequence is KASAAAEAPAEAPAAEAAAEE.

Belongs to the bacterial ribosomal protein bS16 family.

This chain is Small ribosomal subunit protein bS16, found in Jannaschia sp. (strain CCS1).